A 284-amino-acid polypeptide reads, in one-letter code: Bifunctional protein FolD 1 (284 aa).

Residues 166–168 and Ile232 contribute to the NADP(+) site; that span reads GAS.

Belongs to the tetrahydrofolate dehydrogenase/cyclohydrolase family. As to quaternary structure, homodimer.

The catalysed reaction is (6R)-5,10-methylene-5,6,7,8-tetrahydrofolate + NADP(+) = (6R)-5,10-methenyltetrahydrofolate + NADPH. The enzyme catalyses (6R)-5,10-methenyltetrahydrofolate + H2O = (6R)-10-formyltetrahydrofolate + H(+). It functions in the pathway one-carbon metabolism; tetrahydrofolate interconversion. Catalyzes the oxidation of 5,10-methylenetetrahydrofolate to 5,10-methenyltetrahydrofolate and then the hydrolysis of 5,10-methenyltetrahydrofolate to 10-formyltetrahydrofolate. In Pseudomonas savastanoi pv. phaseolicola (strain 1448A / Race 6) (Pseudomonas syringae pv. phaseolicola (strain 1448A / Race 6)), this protein is Bifunctional protein FolD 1.